The primary structure comprises 317 residues: Methionyl-tRNA formyltransferase (317 aa).

Ser-112–Pro-115 contributes to the (6S)-5,6,7,8-tetrahydrofolate binding site.

The protein belongs to the Fmt family.

It catalyses the reaction L-methionyl-tRNA(fMet) + (6R)-10-formyltetrahydrofolate = N-formyl-L-methionyl-tRNA(fMet) + (6S)-5,6,7,8-tetrahydrofolate + H(+). In terms of biological role, attaches a formyl group to the free amino group of methionyl-tRNA(fMet). The formyl group appears to play a dual role in the initiator identity of N-formylmethionyl-tRNA by promoting its recognition by IF2 and preventing the misappropriation of this tRNA by the elongation apparatus. In Histophilus somni (strain 129Pt) (Haemophilus somnus), this protein is Methionyl-tRNA formyltransferase.